The sequence spans 355 residues: Protein RecA (355 aa).

67 to 74 (GPESSGKT) provides a ligand contact to ATP. The tract at residues 335 to 355 (NSLVSDVESEDEGASESNEEF) is disordered. A compositionally biased stretch (acidic residues) spans 341-355 (VESEDEGASESNEEF).

This sequence belongs to the RecA family.

The protein localises to the cytoplasm. In terms of biological role, can catalyze the hydrolysis of ATP in the presence of single-stranded DNA, the ATP-dependent uptake of single-stranded DNA by duplex DNA, and the ATP-dependent hybridization of homologous single-stranded DNAs. It interacts with LexA causing its activation and leading to its autocatalytic cleavage. The chain is Protein RecA from Sodalis glossinidius.